We begin with the raw amino-acid sequence, 125 residues long: Small ribosomal subunit protein uS12c (125 aa).

Belongs to the universal ribosomal protein uS12 family. As to quaternary structure, part of the 30S ribosomal subunit.

Its subcellular location is the plastid. The protein resides in the chloroplast. In terms of biological role, with S4 and S5 plays an important role in translational accuracy. Located at the interface of the 30S and 50S subunits. This chain is Small ribosomal subunit protein uS12c (rps12), found in Nephroselmis olivacea (Green alga).